The chain runs to 155 residues: Plastocyanin, chloroplastic (155 aa).

The transit peptide at 1-58 directs the protein to the chloroplast; that stretch reads MAALSSAAVSVPSFAAATPMRSSRSSRMVVRASLGKKAASAAVAMAAGAMLLGGSAMA. Positions 59-155 constitute a Plastocyanin-like domain; sequence QDVLLGANGG…AGMVGKVTVN (97 aa). Residues histidine 95, cysteine 140, histidine 143, and methionine 148 each contribute to the Cu cation site.

This sequence belongs to the plastocyanin family. It depends on Cu(2+) as a cofactor.

It localises to the plastid. The protein localises to the chloroplast thylakoid membrane. In terms of biological role, participates in electron transfer between P700 and the cytochrome b6-f complex in photosystem I. The polypeptide is Plastocyanin, chloroplastic (PETE) (Hordeum vulgare (Barley)).